The chain runs to 986 residues: Zinc finger protein 445 (986 aa).

Positions Arg-52–Leu-134 constitute an SCAN box domain. One can recognise a KRAB domain in the interval Leu-219–Asp-289. Glycyl lysine isopeptide (Lys-Gly) (interchain with G-Cter in SUMO2) cross-links involve residues Lys-302, Lys-360, and Lys-385. Residues Gln-433–Arg-460 are disordered. The segment covering Glu-439–Arg-460 has biased composition (basic and acidic residues). 2 C2H2-type zinc fingers span residues Phe-470–His-492 and Tyr-498–His-520. A Glycyl lysine isopeptide (Lys-Gly) (interchain with G-Cter in SUMO2) cross-link involves residue Lys-524. 2 C2H2-type zinc fingers span residues Leu-553 to His-575 and Tyr-581 to His-604. Residue Lys-609 forms a Glycyl lysine isopeptide (Lys-Gly) (interchain with G-Cter in SUMO2) linkage. 2 consecutive C2H2-type zinc fingers follow at residues Phe-634–His-656 and Tyr-662–His-686. Lys-691 participates in a covalent cross-link: Glycyl lysine isopeptide (Lys-Gly) (interchain with G-Cter in SUMO2). 4 C2H2-type zinc fingers span residues Asn-718–His-740, Tyr-746–His-768, Phe-796–His-818, and Phe-824–His-846. Residue Lys-929 forms a Glycyl lysine isopeptide (Lys-Gly) (interchain with G-Cter in SUMO2) linkage. 2 C2H2-type zinc fingers span residues His-933–His-955 and Phe-961–His-983.

Belongs to the krueppel C2H2-type zinc-finger protein family.

Its subcellular location is the nucleus. Transcription regulator required to maintain maternal and paternal gene imprinting, a process by which gene expression is restricted in a parent of origin-specific manner by epigenetic modification of genomic DNA and chromatin, including DNA methylation. Acts by controlling DNA methylation during the earliest multicellular stages of development at multiple imprinting control regions (ICRs). Acts together with ZFP57, but ZFP57 plays the predominant role in imprinting maintenance. In contrast, ZNF445 seems to be the major factor in human early embryonic imprinting maintenance. In Mus musculus (Mouse), this protein is Zinc finger protein 445 (Znf445).